A 391-amino-acid chain; its full sequence is 8-amino-7-oxononanoate synthase (391 aa).

Residue R19 coordinates substrate. 106-107 (GY) is a binding site for pyridoxal 5'-phosphate. A substrate-binding site is contributed by H131. Pyridoxal 5'-phosphate contacts are provided by S178, H206, and T234. Position 237 is an N6-(pyridoxal phosphate)lysine (K237). T353 serves as a coordination point for substrate.

Belongs to the class-II pyridoxal-phosphate-dependent aminotransferase family. BioF subfamily. In terms of assembly, homodimer. Requires pyridoxal 5'-phosphate as cofactor.

It carries out the reaction 6-carboxyhexanoyl-[ACP] + L-alanine + H(+) = (8S)-8-amino-7-oxononanoate + holo-[ACP] + CO2. It functions in the pathway cofactor biosynthesis; biotin biosynthesis. Catalyzes the decarboxylative condensation of pimeloyl-[acyl-carrier protein] and L-alanine to produce 8-amino-7-oxononanoate (AON), [acyl-carrier protein], and carbon dioxide. The polypeptide is 8-amino-7-oxononanoate synthase (Pelobacter propionicus (strain DSM 2379 / NBRC 103807 / OttBd1)).